Consider the following 502-residue polypeptide: MNGGLLVAGTTSDAGKSVVTAGICRWLVRQGVKVAPFKAQNMSLNSFVTRDGAEIGRAQAMQAQACRVEPTAHMNPVLLKPGGERSSQVVLLGRPVGEMSARGYHGGRQERLLGTVLDSLAELRGTYDAVICEGAGSPAEINLRRTDIVNMGIARGAGLPVLVVGDIDRGGVFASFFGTVALLAPEDQALVAGFLVNKFRGDVSLLEPGLDMLHGLTGRRTYGVLPFRHGLGIDEEDGLRVSLRGTVRESVVAPPVGEDVLRVAVCAVPLMSNFTDVDALAAEPGVVVRFVDRPEELADADLVIVPGTRGTVRALEWLRERGLADAIARRAAERRPVLGICGGYQLLGEHIEDEVESRAGHVDGLGLLPVRVRFDREKTLTRAVGEALGEPVEGYEIHHGVAEVTGGAPFLDGCRVGRTWGTHWHGSLESDGFRRAFLREVAAAAGRRFVPAPDTSFAALREEQLDRLGDLIEHHADTDALWRLIESGAPQGLPFIPPGAPA.

Positions 260–433 (VLRVAVCAVP…WHGSLESDGF (174 aa)) constitute a GATase cobBQ-type domain. C341 functions as the Nucleophile in the catalytic mechanism. H425 is an active-site residue.

It belongs to the CobB/CobQ family. CobQ subfamily.

The protein operates within cofactor biosynthesis; adenosylcobalamin biosynthesis. In terms of biological role, catalyzes amidations at positions B, D, E, and G on adenosylcobyrinic A,C-diamide. NH(2) groups are provided by glutamine, and one molecule of ATP is hydrogenolyzed for each amidation. This is Cobyric acid synthase from Streptomyces coelicolor (strain ATCC BAA-471 / A3(2) / M145).